A 190-amino-acid polypeptide reads, in one-letter code: Negative regulator YfiR (190 aa).

Arg-60 is a GMP binding site. 2 disulfides stabilise this stretch: Cys-71/Cys-110 and Cys-145/Cys-152. Positions 175 and 177 each coordinate GMP.

In terms of assembly, homodimer. Interacts with TpbB/YfiN. Interacts with YfiB. The YfiB-YfiR complex is a 2:2 heterotetramer. In terms of processing, cys-71 and Cys-110 form a disulfide bond in the oxidized form but maintain their free form in the non-oxidized YfiR structure. The Cys-145-Cys-152 disulfide bond is well formed in both structures. The Cys145-Cys152 disulfide bond, but not Cys-71-Cys-110, plays an important role in maintaining the correct folding of the protein.

Its subcellular location is the periplasm. TpbB/YfiN repression is released through an YfiB-dependent sequestration of YfiR to the outer membrane. Binds vitamin B6 (VB6) or L-Trp at the periphery of the dimer, and both VB6 and L-Trp are able to reduce biofilm formation induced by YfiB L43P mutant. However, VB6 or L-Trp alone may have little effects in interrupting the YfiB-YfiR interaction. GMP enhances the binding affinity between YfiB and YfiR. Its function is as follows. Negatively regulates the activity of the diguanylate cyclase TpbB/YfiN, leading to decreased c-di-GMP production. Inhibits TpbB/YfiN allosterically, through a hydrophobic interaction between the C-terminus of YfiR and a conserved region of the periplasmic PAS domain of TpbB/YfiN. Under reducing conditions, may also act as an YfiB-independent sensing device that is able to activate TpbB/YfiN in response to the redox status of the periplasm. Functionally, part of the YfiB-TpbB-YfiR (or yfiBNR) system, encoding a tripartite signaling module that modulates intracellular c-di-GMP levels. The system is a key regulator of the small colony variant (SCV) phenotype, and plays an important role in biofilm formation and in vivo persistence. The c-di-GMP produced by TpbB/YfiN stimulates the production of the Pel and Psl exopolysaccharides, which promotes surface attachment, generates an SCV phenotype and confers resistance against phagocytosis. This chain is Negative regulator YfiR, found in Pseudomonas aeruginosa (strain ATCC 15692 / DSM 22644 / CIP 104116 / JCM 14847 / LMG 12228 / 1C / PRS 101 / PAO1).